Here is a 484-residue protein sequence, read N- to C-terminus: MATASSKKNIGRISQVIGPVVDVLFEEKLPPLLTALETKNQDATVVLEVAQHLGENVVRTISMDTTDGLVRGQEVVDTGSEIRVPVGPETLGRIMNVVGRPVDERGPIGSKQTMPIHADAPPFTEQSTDTAILTTGIKVIDLLAPYSKGGKVGLFGGAGVGKTVLIQELINNIAKGHGGFSVFAGVGERTREGNDLYHEFLEAGVIASDKDGNAISEGSKVALVYGQMNEPPGARARVALSGLTMAEYFRDQEGQDVLFFVDNIFRFTQAGAEVSALLGRIPSAVGYQPTLATDMGQLQERITSTKKGSITSVQAIYVPADDLTDPAPAASFAHLDATTVLSRAISEMGIYPAVDPLDSSSRNLEPRIVGDEHYQTARDVQEILQRYKNLQDIIAILGMDELSEDDRKVVGRARRIQRFLSQPFHVAEVFTGMPGKFVQVEDTVRSFREIIDGKYDDLPENAFYMVGSIDEAVAKAEKMAAEAA.

The disordered stretch occupies residues 104-123 (ERGPIGSKQTMPIHADAPPF). 156–163 (GGAGVGKT) is an ATP binding site.

The protein belongs to the ATPase alpha/beta chains family. F-type ATPases have 2 components, CF(1) - the catalytic core - and CF(0) - the membrane proton channel. CF(1) has five subunits: alpha(3), beta(3), gamma(1), delta(1), epsilon(1). CF(0) has three main subunits: a(1), b(2) and c(9-12). The alpha and beta chains form an alternating ring which encloses part of the gamma chain. CF(1) is attached to CF(0) by a central stalk formed by the gamma and epsilon chains, while a peripheral stalk is formed by the delta and b chains.

It is found in the cell inner membrane. It carries out the reaction ATP + H2O + 4 H(+)(in) = ADP + phosphate + 5 H(+)(out). Produces ATP from ADP in the presence of a proton gradient across the membrane. The catalytic sites are hosted primarily by the beta subunits. In Zymomonas mobilis subsp. mobilis (strain ATCC 31821 / ZM4 / CP4), this protein is ATP synthase subunit beta.